The chain runs to 185 residues: Ribosome-recycling factor (185 aa).

The protein belongs to the RRF family.

It localises to the cytoplasm. Functionally, responsible for the release of ribosomes from messenger RNA at the termination of protein biosynthesis. May increase the efficiency of translation by recycling ribosomes from one round of translation to another. The polypeptide is Ribosome-recycling factor (Bacillus licheniformis (strain ATCC 14580 / DSM 13 / JCM 2505 / CCUG 7422 / NBRC 12200 / NCIMB 9375 / NCTC 10341 / NRRL NRS-1264 / Gibson 46)).